The sequence spans 234 residues: Enolase-phosphatase E1 (234 aa).

The tract at residues 212–234 (RPGNYPQPQHSHFKISSFEGLNP) is disordered.

This sequence belongs to the HAD-like hydrolase superfamily. MasA/MtnC family. Monomer. Requires Mg(2+) as cofactor.

The catalysed reaction is 5-methylsulfanyl-2,3-dioxopentyl phosphate + H2O = 1,2-dihydroxy-5-(methylsulfanyl)pent-1-en-3-one + phosphate. Its pathway is amino-acid biosynthesis; L-methionine biosynthesis via salvage pathway; L-methionine from S-methyl-5-thio-alpha-D-ribose 1-phosphate: step 3/6. It participates in amino-acid biosynthesis; L-methionine biosynthesis via salvage pathway; L-methionine from S-methyl-5-thio-alpha-D-ribose 1-phosphate: step 4/6. Its function is as follows. Bifunctional enzyme that catalyzes the enolization of 2,3-diketo-5-methylthiopentyl-1-phosphate (DK-MTP-1-P) into the intermediate 2-hydroxy-3-keto-5-methylthiopentenyl-1-phosphate (HK-MTPenyl-1-P), which is then dephosphorylated to form the acireductone 1,2-dihydroxy-3-keto-5-methylthiopentene (DHK-MTPene). The polypeptide is Enolase-phosphatase E1 (Leptospira interrogans serogroup Icterohaemorrhagiae serovar copenhageni (strain Fiocruz L1-130)).